We begin with the raw amino-acid sequence, 196 residues long: Probable GTP-binding protein EngB (196 aa).

One can recognise an EngB-type G domain in the interval 21–195 (DVSEICLIGR…YELIDKLLGS (175 aa)). Residues 29-36 (GRSNVGKS), 56-60 (GKTRL), 75-78 (DAPG), 142-145 (TKLD), and 174-176 (ISN) contribute to the GTP site. Positions 36 and 58 each coordinate Mg(2+).

It belongs to the TRAFAC class TrmE-Era-EngA-EngB-Septin-like GTPase superfamily. EngB GTPase family. The cofactor is Mg(2+).

In terms of biological role, necessary for normal cell division and for the maintenance of normal septation. This is Probable GTP-binding protein EngB from Mycoplasma mycoides subsp. mycoides SC (strain CCUG 32753 / NCTC 10114 / PG1).